We begin with the raw amino-acid sequence, 782 residues long: Ribosome biogenesis protein ERB1 (782 aa).

Disordered regions lie at residues 1-123 (MGSK…RIEK) and 339-361 (PEEY…EDRE). Residues 35–86 (SEDEEDYLPSDDDDDVEDSENEGTGASEDDDDDDDDDDILSDDIPSDVDSEE) show a composition bias toward acidic residues. The segment covering 105 to 123 (VDPKREEDDGADRNYRIEK) has biased composition (basic and acidic residues). 7 WD repeats span residues 433-472 (GHEG…QVWS), 476-516 (NSEE…VTPA), 567-609 (TVRS…TQIP), 612-650 (KLSG…LVKV), 653-692 (PGAK…RPYK), 696-736 (FHGQ…DQLE), and 752-782 (VSKL…RLWM).

Belongs to the WD repeat BOP1/ERB1 family. Component of the NOP7 complex, composed of ERB1, NOP7 and YTM1. The complex is held together by ERB1, which interacts with NOP7 via its N-terminal domain and with YTM1 via a high-affinity interaction between the seven-bladed beta-propeller domains of the 2 proteins. The NOP7 complex associates with the 66S pre-ribosome.

Its subcellular location is the nucleus. The protein resides in the nucleolus. The protein localises to the nucleoplasm. Its function is as follows. Component of the NOP7 complex, which is required for maturation of the 25S and 5.8S ribosomal RNAs and formation of the 60S ribosome. The protein is Ribosome biogenesis protein ERB1 of Chaetomium globosum (strain ATCC 6205 / CBS 148.51 / DSM 1962 / NBRC 6347 / NRRL 1970) (Soil fungus).